Reading from the N-terminus, the 328-residue chain is DNA repair and recombination protein RadA (328 aa).

Residue 118 to 125 participates in ATP binding; sequence GEYGSGKT.

The protein belongs to the eukaryotic RecA-like protein family.

Functionally, involved in DNA repair and in homologous recombination. Binds and assemble on single-stranded DNA to form a nucleoprotein filament. Hydrolyzes ATP in a ssDNA-dependent manner and promotes DNA strand exchange between homologous DNA molecules. The sequence is that of DNA repair and recombination protein RadA from Desulfurococcus amylolyticus (strain DSM 18924 / JCM 16383 / VKM B-2413 / 1221n) (Desulfurococcus kamchatkensis).